The chain runs to 64 residues: Small ribosomal subunit protein bS18c (64 aa).

This sequence belongs to the bacterial ribosomal protein bS18 family. As to quaternary structure, part of the 30S ribosomal subunit.

It is found in the plastid. The protein localises to the chloroplast. The chain is Small ribosomal subunit protein bS18c (rps18) from Bigelowiella natans (Pedinomonas minutissima).